A 261-amino-acid chain; its full sequence is Basic leucine zipper 19 (261 aa).

2 disordered regions span residues 1–22 and 74–100; these read MEDG…MGEL and ESDE…LGNR. A compositionally biased stretch (polar residues) spans 8–18; sequence FSNQEVFSSSE. Positions 88–100 are enriched in basic and acidic residues; sequence CGKKGEKRPLGNR. The bZIP domain occupies 89–155; the sequence is GKKGEKRPLG…SRLKCLLVDL (67 aa). Residues 90 to 113 are basic motif; sequence KKGEKRPLGNREAVRKYREKKKAK. The segment at 117-131 is leucine-zipper; sequence LEDEVARLRAVNQQL. The span at 237-248 shows a compositional bias: low complexity; the sequence is NGSFSNVNTSVS. A disordered region spans residues 237 to 261; sequence NGSFSNVNTSVSNKRKGGHRASRAV. Residues 249-261 are compositionally biased toward basic residues; sequence NKRKGGHRASRAV.

Its subcellular location is the nucleus. Its function is as follows. Transcription factor involved in the response to zinc ion deficiency. Binds to the consensus sequence 5'-[AG]TGTCGACA[CT]-3' also called zinc deficiency response element (ZDRE). The ZDRE sequence is conserved in the plant kingdom and present in the promoters of genes that constitute the primary response to zinc deficiency, comprising additional ZIP metal transporter genes. Required for zinc accumulation in roots. Mediates the expression of the zinc transporters ZIP3, ZIP4, ZIP5 and ZIP9 during growth in zinc-deficient conditions. ZIP9 transporter is involved in zinc uptake in roots. The polypeptide is Basic leucine zipper 19 (Arabidopsis thaliana (Mouse-ear cress)).